Consider the following 218-residue polypeptide: Glycoprotein UL1 (218 aa).

The first 27 residues, 1-27, serve as a signal peptide directing secretion; sequence MGVQCNSKLLLLAVLITIILSSILVQA. A helical membrane pass occupies residues 178–198; that stretch reads VATHVGWTATVVIIICVLTYV.

It belongs to the RL11 family.

It is found in the virion membrane. The sequence is that of Glycoprotein UL1 (UL1) from Homo sapiens (Human).